Here is a 199-residue protein sequence, read N- to C-terminus: Pneumococcal vaccine antigen A homolog (199 aa).

It localises to the cell surface. This is Pneumococcal vaccine antigen A homolog (pvaA) from Streptococcus pyogenes serotype M3 (strain ATCC BAA-595 / MGAS315).